Consider the following 109-residue polypeptide: Con-Ins K2 (109 aa).

The signal sequence occupies residues 1–24 (MTTSSYFLLVALGLLLYVCQSSFG). A propeptide spanning residues 25–29 (NPHTR) is cleaved from the precursor. 3 cysteine pairs are disulfide-bonded: cysteine 41-cysteine 90, cysteine 53-cysteine 103, and cysteine 89-cysteine 94. Position 44 is a 4-carboxyglutamate (glutamate 44). Residues 57 to 83 (RKRRGFPSMLKARAKRNEAFLLQRDGR) constitute a propeptide, c peptide.

The protein belongs to the insulin family. In terms of assembly, heterodimer of A and B chains; disulfide-linked. As to expression, expressed by the venom gland.

It is found in the secreted. Its function is as follows. This venom insulin, from a fish-hunting cone snail, facilitates prey capture by rapidly inducing hypoglycemic shock. It is one of the smallest known insulin found in nature and lacks the C-terminal segment of the B chain that, in human insulin, mediates engagement of the insulin receptor (INSR) and assembly of the hormone's hexameric storage form. Despite lacking this segment, it both binds and activates human insulin receptor (long isoform (HIR-B)) with a moderate potency (EC(50)=373.2 nM). In vivo, intraperitoneal injection of this peptide into zebrafish lowers blood glucose with a lower potency than human insulin. In addition, when applied to water, this peptide reduces overall locomotor activity of zebrafish larvae, observed as a significant decrease in the percentage of time spent swimming and movement frequency. When tested on a mouse model of diabetes, this insulin also lowers blood glucose with a 20-fold lower potency than human insulin. In Conus kinoshitai (Kinoshita's cone), this protein is Con-Ins K2.